Consider the following 365-residue polypeptide: Putative agmatine deiminase (365 aa).

The active-site Amidino-cysteine intermediate is the Cys357.

The protein belongs to the agmatine deiminase family.

It catalyses the reaction agmatine + H2O = N-carbamoylputrescine + NH4(+). The sequence is that of Putative agmatine deiminase from Yersinia pseudotuberculosis serotype O:1b (strain IP 31758).